The sequence spans 256 residues: Phosphatidylglycerol--prolipoprotein diacylglyceryl transferase (256 aa).

Transmembrane regions (helical) follow at residues 19 to 39 (VHWY…LGYW), 56 to 76 (LIFY…MLFY), and 91 to 111 (IWEG…AAWL). Arginine 139 is a binding site for a 1,2-diacyl-sn-glycero-3-phospho-(1'-sn-glycerol). The helical transmembrane segment at 231-251 (FGWLTMGQVLSIPMLLIGIWL) threads the bilayer.

This sequence belongs to the Lgt family.

The protein localises to the cell inner membrane. The catalysed reaction is L-cysteinyl-[prolipoprotein] + a 1,2-diacyl-sn-glycero-3-phospho-(1'-sn-glycerol) = an S-1,2-diacyl-sn-glyceryl-L-cysteinyl-[prolipoprotein] + sn-glycerol 1-phosphate + H(+). The protein operates within protein modification; lipoprotein biosynthesis (diacylglyceryl transfer). Its function is as follows. Catalyzes the transfer of the diacylglyceryl group from phosphatidylglycerol to the sulfhydryl group of the N-terminal cysteine of a prolipoprotein, the first step in the formation of mature lipoproteins. This Legionella pneumophila (strain Lens) protein is Phosphatidylglycerol--prolipoprotein diacylglyceryl transferase.